The chain runs to 281 residues: Large ribosomal subunit protein uL2 (281 aa).

Disordered stretches follow at residues 1-23 (MAVK…DYSK) and 224-281 (RGSV…KDSK). Positions 12-23 (GRRNMSSLDYSK) are enriched in polar residues. Over residues 261-281 (KTRKTKKSSTKLILRRRKDSK) the composition is skewed to basic residues.

The protein belongs to the universal ribosomal protein uL2 family. In terms of assembly, part of the 50S ribosomal subunit. Forms a bridge to the 30S subunit in the 70S ribosome.

Its function is as follows. One of the primary rRNA binding proteins. Required for association of the 30S and 50S subunits to form the 70S ribosome, for tRNA binding and peptide bond formation. It has been suggested to have peptidyltransferase activity; this is somewhat controversial. Makes several contacts with the 16S rRNA in the 70S ribosome. The polypeptide is Large ribosomal subunit protein uL2 (Mycoplasmopsis agalactiae (strain NCTC 10123 / CIP 59.7 / PG2) (Mycoplasma agalactiae)).